A 494-amino-acid polypeptide reads, in one-letter code: DUF21 domain-containing protein At4g14240 (494 aa).

Residues 1 to 43 (MHLINAVAAARILSGIGQSNGNNGGEAIPFGSFEWITYAGISC) are Extracellular-facing. Residues 31 to 213 (GSFEWITYAG…GKGGELTHDE (183 aa)) enclose the CNNM transmembrane domain. Residues 44 to 64 (FLVLFAGIMSGLTLGLMSLGL) traverse the membrane as a helical segment. Over 65 to 93 (VELEILQRSGTPNEKKQAAAIFPVVQKQH) the chain is Cytoplasmic. Residues 94-114 (QLLVTLLLCNAMAMEGLPIYL) traverse the membrane as a helical segment. At 115–121 (DKLFNEY) the chain is on the extracellular side. The chain crosses the membrane as a helical span at residues 122 to 142 (VAIILSVTFVLAFGEVIPQAI). Over 143–159 (CTRYGLAVGANFVWLVR) the chain is Cytoplasmic. The helical transmembrane segment at 160-180 (ILMTLCYPIAFPIGKILDLVL) threads the bilayer. At 181–494 (GHNDALFRRA…TITEPIRRNN (314 aa)) the chain is on the extracellular side. CBS domains are found at residues 232–292 (MTPI…TETL), 297–352 (CIRR…SNDS), and 364–425 (GNHD…IVDE). 2 N-linked (GlcNAc...) asparagine glycosylation sites follow: Asn-350 and Asn-385. The segment at 459 to 494 (QKGTGGQNKQGQTNKVPGQEQDKMLGTITEPIRRNN) is disordered.

The protein localises to the membrane. The protein is DUF21 domain-containing protein At4g14240 (CBSDUF1) of Arabidopsis thaliana (Mouse-ear cress).